A 367-amino-acid polypeptide reads, in one-letter code: Glutamate 5-kinase (367 aa).

Residue lysine 10 coordinates ATP. Substrate-binding residues include serine 50, aspartate 137, and asparagine 149. Residues 169–170 and 211–217 contribute to the ATP site; these read TD and TGGMSTK. The PUA domain maps to 275 to 353; sequence AGEITVDDGA…QQIAEILGYE (79 aa).

Belongs to the glutamate 5-kinase family.

The protein localises to the cytoplasm. The enzyme catalyses L-glutamate + ATP = L-glutamyl 5-phosphate + ADP. The protein operates within amino-acid biosynthesis; L-proline biosynthesis; L-glutamate 5-semialdehyde from L-glutamate: step 1/2. In terms of biological role, catalyzes the transfer of a phosphate group to glutamate to form L-glutamate 5-phosphate. This is Glutamate 5-kinase from Pectobacterium carotovorum subsp. carotovorum (strain PC1).